The following is a 339-amino-acid chain: Anthranilate phosphoribosyltransferase (339 aa).

Residues Gly-81, 84-85 (GD), Thr-89, 91-94 (NVST), 109-117 (KHGNRSVSS), and Ser-121 each bind 5-phospho-alpha-D-ribose 1-diphosphate. Gly-81 is an anthranilate binding site. Ser-93 provides a ligand contact to Mg(2+). Asn-112 contacts anthranilate. Anthranilate is bound at residue Arg-167. 2 residues coordinate Mg(2+): Asp-226 and Glu-227.

This sequence belongs to the anthranilate phosphoribosyltransferase family. Homodimer. The cofactor is Mg(2+).

The catalysed reaction is N-(5-phospho-beta-D-ribosyl)anthranilate + diphosphate = 5-phospho-alpha-D-ribose 1-diphosphate + anthranilate. It functions in the pathway amino-acid biosynthesis; L-tryptophan biosynthesis; L-tryptophan from chorismate: step 2/5. Its function is as follows. Catalyzes the transfer of the phosphoribosyl group of 5-phosphorylribose-1-pyrophosphate (PRPP) to anthranilate to yield N-(5'-phosphoribosyl)-anthranilate (PRA). The chain is Anthranilate phosphoribosyltransferase from Persephonella marina (strain DSM 14350 / EX-H1).